The sequence spans 355 residues: Uroporphyrinogen decarboxylase (355 aa).

Residues 27–31 (RQAGR), D78, Y155, T210, and H328 contribute to the substrate site.

The protein belongs to the uroporphyrinogen decarboxylase family. Homodimer.

It is found in the cytoplasm. It catalyses the reaction uroporphyrinogen III + 4 H(+) = coproporphyrinogen III + 4 CO2. Its pathway is porphyrin-containing compound metabolism; protoporphyrin-IX biosynthesis; coproporphyrinogen-III from 5-aminolevulinate: step 4/4. Functionally, catalyzes the decarboxylation of four acetate groups of uroporphyrinogen-III to yield coproporphyrinogen-III. This chain is Uroporphyrinogen decarboxylase, found in Pseudomonas fluorescens (strain SBW25).